The chain runs to 820 residues: Probable protease Ga0182885_104520 (820 aa).

This sequence belongs to the peptidase C25 family.

In terms of biological role, probably a dedicated protease for substrate gasdermin bGSDM; cleaves the bGSDM precursor, releasing the pore-forming moiety, which integrates into the membrane and triggers cell death. Involved in defense against bacteriophages. Expression of bacterial gasdermin (bGSDM) and this neighboring protease is toxic in E.coli. The protein is Probable protease Ga0182885_104520 of Desulfuromonadales bacterium.